The primary structure comprises 3218 residues: Serine/threonine-protein kinase Smg1 (3218 aa).

The segment at 32–78 (LNNNGNHGDSSNEGGGGNGSGRGGATGSGNIAGLGGSESMWSPGGGK) is disordered. The span at 33 to 43 (NNNGNHGDSSN) shows a compositional bias: low complexity. Over residues 44–67 (EGGGGNGSGRGGATGSGNIAGLGG) the composition is skewed to gly residues. The residue at position 70 (Ser70) is a Phosphoserine. In terms of domain architecture, FAT spans 1289 to 1692 (DAAAAAREEG…IFPAVVGANR (404 aa)). An HEAT repeat occupies 1643-1678 (APWKVIIPQLFSRLNHHEPYVRKSVCDLLCRLAKSR). Positions 1897-2232 (VESSVCVLPT…LGVGDLKYHK (336 aa)) constitute a PI3K/PI4K catalytic domain. The interval 1903 to 1909 (VLPTKTK) is G-loop. The tract at residues 2101 to 2109 (GLGDRHLDN) is catalytic loop. The interval 2121-2145 (HIDYNVCFEKGRTLRIPEKVPFRLT) is activation loop. In terms of domain architecture, FATC spans 3186-3218 (QRSTVAEQVDYVIREACNPENLAVLYEGWTPWV).

This sequence belongs to the PI3/PI4-kinase family. In terms of assembly, component of a post-splicing multiprotein NMD complex. Mn(2+) is required as a cofactor.

It is found in the cytoplasm. It catalyses the reaction L-seryl-[protein] + ATP = O-phospho-L-seryl-[protein] + ADP + H(+). The catalysed reaction is L-threonyl-[protein] + ATP = O-phospho-L-threonyl-[protein] + ADP + H(+). Serine/threonine protein kinase involved in mRNA surveillance. Recognizes the substrate consensus sequence [ST]-Q. Involved in nonsense-mediated decay (NMD) of mRNAs containing premature stop codons, probably by phosphorylating Upf1. In Drosophila melanogaster (Fruit fly), this protein is Serine/threonine-protein kinase Smg1 (nonC).